An 876-amino-acid polypeptide reads, in one-letter code: Leucine--tRNA ligase (876 aa).

The short motif at 43 to 53 (PYPSGRIHMGH) is the 'HIGH' region element. The 'KMSKS' region signature appears at 632–636 (KMSKS). Residue Lys635 participates in ATP binding.

The protein belongs to the class-I aminoacyl-tRNA synthetase family.

The protein resides in the cytoplasm. The enzyme catalyses tRNA(Leu) + L-leucine + ATP = L-leucyl-tRNA(Leu) + AMP + diphosphate. The sequence is that of Leucine--tRNA ligase from Rhodopseudomonas palustris (strain ATCC BAA-98 / CGA009).